A 342-amino-acid polypeptide reads, in one-letter code: Flagellar P-ring protein (342 aa).

Positions 1–19 are cleaved as a signal peptide; the sequence is MKRVFLWLIFVLAFHKLLA.

The protein belongs to the FlgI family. In terms of assembly, the basal body constitutes a major portion of the flagellar organelle and consists of four rings (L,P,S, and M) mounted on a central rod.

The protein localises to the periplasm. Its subcellular location is the bacterial flagellum basal body. Functionally, assembles around the rod to form the L-ring and probably protects the motor/basal body from shearing forces during rotation. The protein is Flagellar P-ring protein of Helicobacter pylori (strain G27).